Here is a 327-residue protein sequence, read N- to C-terminus: Biotin synthase (327 aa).

The 230-residue stretch at 44–273 (FMGNKFDTCS…NAFLRFSGGR (230 aa)) folds into the Radical SAM core domain. Residues C62, C66, and C69 each coordinate [4Fe-4S] cluster. Positions 138, 198, and 268 each coordinate [2Fe-2S] cluster.

It belongs to the radical SAM superfamily. Biotin synthase family. Homodimer. Requires [4Fe-4S] cluster as cofactor. The cofactor is [2Fe-2S] cluster.

The catalysed reaction is (4R,5S)-dethiobiotin + (sulfur carrier)-SH + 2 reduced [2Fe-2S]-[ferredoxin] + 2 S-adenosyl-L-methionine = (sulfur carrier)-H + biotin + 2 5'-deoxyadenosine + 2 L-methionine + 2 oxidized [2Fe-2S]-[ferredoxin]. The protein operates within cofactor biosynthesis; biotin biosynthesis; biotin from 7,8-diaminononanoate: step 2/2. Functionally, catalyzes the conversion of dethiobiotin (DTB) to biotin by the insertion of a sulfur atom into dethiobiotin via a radical-based mechanism. This Parabacteroides distasonis (strain ATCC 8503 / DSM 20701 / CIP 104284 / JCM 5825 / NCTC 11152) protein is Biotin synthase.